Reading from the N-terminus, the 145-residue chain is 3-dehydroquinate dehydratase (145 aa).

The active-site Proton acceptor is Tyr-22. Residues Asn-74, His-80, and Asp-87 each contribute to the substrate site. His-100 (proton donor) is an active-site residue. Residues Ile-101–Ser-102 and Arg-111 each bind substrate.

It belongs to the type-II 3-dehydroquinase family. As to quaternary structure, homododecamer.

It carries out the reaction 3-dehydroquinate = 3-dehydroshikimate + H2O. Its pathway is metabolic intermediate biosynthesis; chorismate biosynthesis; chorismate from D-erythrose 4-phosphate and phosphoenolpyruvate: step 3/7. In terms of biological role, catalyzes a trans-dehydration via an enolate intermediate. The polypeptide is 3-dehydroquinate dehydratase (Lachnoclostridium phytofermentans (strain ATCC 700394 / DSM 18823 / ISDg) (Clostridium phytofermentans)).